A 170-amino-acid chain; its full sequence is Cyclic pyranopterin monophosphate synthase (170 aa).

Substrate-binding positions include 75–77 (LCH) and 113–114 (ME). Aspartate 128 is an active-site residue.

Belongs to the MoaC family. In terms of assembly, homohexamer; trimer of dimers.

It catalyses the reaction (8S)-3',8-cyclo-7,8-dihydroguanosine 5'-triphosphate = cyclic pyranopterin phosphate + diphosphate. It functions in the pathway cofactor biosynthesis; molybdopterin biosynthesis. Its function is as follows. Catalyzes the conversion of (8S)-3',8-cyclo-7,8-dihydroguanosine 5'-triphosphate to cyclic pyranopterin monophosphate (cPMP). The protein is Cyclic pyranopterin monophosphate synthase of Pelotomaculum thermopropionicum (strain DSM 13744 / JCM 10971 / SI).